The sequence spans 174 residues: Secreted protein A (174 aa).

Positions 1 to 19 are cleaved as a signal peptide; sequence MRLLITLFAIFALFNCSLA. N-linked (GlcNAc...) asparagine glycosylation occurs at N156.

Belongs to the Sct family. Probably contains disulfide bonds.

The protein resides in the secreted. It localises to the extracellular vesicle. This Dictyostelium discoideum (Social amoeba) protein is Secreted protein A (p17).